The primary structure comprises 155 residues: SsrA-binding protein (155 aa).

Residues 136–155 are disordered; it reads REDLKRRQDQRDIQRAMKSY.

It belongs to the SmpB family.

Its subcellular location is the cytoplasm. Its function is as follows. Required for rescue of stalled ribosomes mediated by trans-translation. Binds to transfer-messenger RNA (tmRNA), required for stable association of tmRNA with ribosomes. tmRNA and SmpB together mimic tRNA shape, replacing the anticodon stem-loop with SmpB. tmRNA is encoded by the ssrA gene; the 2 termini fold to resemble tRNA(Ala) and it encodes a 'tag peptide', a short internal open reading frame. During trans-translation Ala-aminoacylated tmRNA acts like a tRNA, entering the A-site of stalled ribosomes, displacing the stalled mRNA. The ribosome then switches to translate the ORF on the tmRNA; the nascent peptide is terminated with the 'tag peptide' encoded by the tmRNA and targeted for degradation. The ribosome is freed to recommence translation, which seems to be the essential function of trans-translation. The protein is SsrA-binding protein of Nostoc punctiforme (strain ATCC 29133 / PCC 73102).